Consider the following 129-residue polypeptide: Glycine cleavage system H protein (129 aa).

A Lipoyl-binding domain is found at 24-106; it reads SYTVGISEHA…FGDGWFFRVM (83 aa). N6-lipoyllysine is present on Lys65.

It belongs to the GcvH family. In terms of assembly, the glycine cleavage system is composed of four proteins: P, T, L and H. (R)-lipoate is required as a cofactor.

In terms of biological role, the glycine cleavage system catalyzes the degradation of glycine. The H protein shuttles the methylamine group of glycine from the P protein to the T protein. This chain is Glycine cleavage system H protein, found in Shewanella woodyi (strain ATCC 51908 / MS32).